The following is a 502-amino-acid chain: Xylan O-acetyltransferase 13 (502 aa).

At 1–53 (MWSALFSHLREVHKRSGVKEEKLIMKSPPAAGEAGCHKPQATATNKMTVLQSP) the chain is on the cytoplasmic side. The helical; Signal-anchor for type II membrane protein transmembrane segment at 54–76 (LGLRTILTSLVAFFIVVSSVSLL) threads the bilayer. Topologically, residues 77 to 502 (FDRGQDAQAQ…EFLYAYIMHK (426 aa)) are lumenal. Intrachain disulfides connect C152-C203, C174-C239, C183-C483, and C399-C479. Residues N153, N163, N189, and N209 are each glycosylated (N-linked (GlcNAc...) asparagine). A GDS motif motif is present at residues 226–228 (GDS). The active-site Nucleophile is S228. N-linked (GlcNAc...) asparagine glycosylation is found at N255, N267, N372, N401, and N442. Catalysis depends on D478, which acts as the Proton donor. A DXXH motif motif is present at residues 478–481 (DCTH). H481 functions as the Proton acceptor in the catalytic mechanism.

Belongs to the PC-esterase family. TBL subfamily.

The protein localises to the golgi apparatus membrane. Its function is as follows. Xylan acetyltransferase required for 2-O- and 3-O-monoacetylation of xylosyl residues in xylan. Catalyzes the 2-O-acetylation of xylan, followed by nonenzymatic acetyl migration to the O-3 position, resulting in products that are monoacetylated at both O-2 and O-3 positions. This Oryza sativa subsp. japonica (Rice) protein is Xylan O-acetyltransferase 13.